Here is a 298-residue protein sequence, read N- to C-terminus: 4-diphosphocytidyl-2-C-methyl-D-erythritol kinase (298 aa).

The active site involves K19. 106 to 116 (PVASGIGGGSA) is an ATP binding site. D148 is an active-site residue.

This sequence belongs to the GHMP kinase family. IspE subfamily.

The enzyme catalyses 4-CDP-2-C-methyl-D-erythritol + ATP = 4-CDP-2-C-methyl-D-erythritol 2-phosphate + ADP + H(+). Its pathway is isoprenoid biosynthesis; isopentenyl diphosphate biosynthesis via DXP pathway; isopentenyl diphosphate from 1-deoxy-D-xylulose 5-phosphate: step 3/6. In terms of biological role, catalyzes the phosphorylation of the position 2 hydroxy group of 4-diphosphocytidyl-2C-methyl-D-erythritol. This Rhizobium leguminosarum bv. trifolii (strain WSM2304) protein is 4-diphosphocytidyl-2-C-methyl-D-erythritol kinase.